The following is a 391-amino-acid chain: Probable acridone synthase 4 (391 aa).

The active site involves C164.

It belongs to the thiolase-like superfamily. Chalcone/stilbene synthases family.

The catalysed reaction is N-methylanthraniloyl-CoA + 3 malonyl-CoA + 3 H(+) = 1,3-dihydroxy-N-methylacridone + 3 CO2 + 4 CoA + H2O. This chain is Probable acridone synthase 4 (ACS4), found in Ruta graveolens (Common rue).